The primary structure comprises 497 residues: NADH-quinone oxidoreductase subunit N (497 aa).

The next 13 membrane-spanning stretches (helical) occupy residues 12–32 (MAPE…DLAL), 40–60 (PLAW…AAMI), 80–100 (AFKF…AEWA), 116–136 (LFAL…TLFV), 166–186 (VING…VFGL), 208–228 (LALA…TVPF), 240–260 (PVPA…ALLL), 284–304 (MQPI…VVAL), 316–336 (SGIA…WAMI), 341–361 (MYLL…AHIV), 383–403 (AAAL…AGFI), 430–450 (TVIS…RPTF), and 457–477 (LPAG…AIGW).

This sequence belongs to the complex I subunit 2 family. As to quaternary structure, NDH-1 is composed of 14 different subunits. Subunits NuoA, H, J, K, L, M, N constitute the membrane sector of the complex.

Its subcellular location is the cell membrane. It catalyses the reaction a quinone + NADH + 5 H(+)(in) = a quinol + NAD(+) + 4 H(+)(out). Functionally, NDH-1 shuttles electrons from NADH, via FMN and iron-sulfur (Fe-S) centers, to quinones in the respiratory chain. The immediate electron acceptor for the enzyme in this species is believed to be a menaquinone. Couples the redox reaction to proton translocation (for every two electrons transferred, four hydrogen ions are translocated across the cytoplasmic membrane), and thus conserves the redox energy in a proton gradient. The chain is NADH-quinone oxidoreductase subunit N from Geobacillus kaustophilus (strain HTA426).